A 212-amino-acid polypeptide reads, in one-letter code: Peptide methionine sulfoxide reductase MsrA (212 aa).

Cysteine 52 is an active-site residue.

Belongs to the MsrA Met sulfoxide reductase family.

It catalyses the reaction L-methionyl-[protein] + [thioredoxin]-disulfide + H2O = L-methionyl-(S)-S-oxide-[protein] + [thioredoxin]-dithiol. It carries out the reaction [thioredoxin]-disulfide + L-methionine + H2O = L-methionine (S)-S-oxide + [thioredoxin]-dithiol. In terms of biological role, has an important function as a repair enzyme for proteins that have been inactivated by oxidation. Catalyzes the reversible oxidation-reduction of methionine sulfoxide in proteins to methionine. The chain is Peptide methionine sulfoxide reductase MsrA from Escherichia coli O6:K15:H31 (strain 536 / UPEC).